A 124-amino-acid polypeptide reads, in one-letter code: Fluoride-specific ion channel FluC (124 aa).

4 helical membrane passes run 4 to 24 (YLVI…TGVY), 36 to 56 (GTLI…ILFL), 63 to 83 (PLWR…LSSI), and 100 to 120 (LLNI…GIVL). Na(+) contacts are provided by G75 and T78.

Belongs to the fluoride channel Fluc/FEX (TC 1.A.43) family.

It localises to the cell inner membrane. The enzyme catalyses fluoride(in) = fluoride(out). Na(+) is not transported, but it plays an essential structural role and its presence is essential for fluoride channel function. Fluoride-specific ion channel. Important for reducing fluoride concentration in the cell, thus reducing its toxicity. This chain is Fluoride-specific ion channel FluC, found in Sulfurihydrogenibium sp. (strain YO3AOP1).